Here is a 431-residue protein sequence, read N- to C-terminus: Adenylosuccinate synthetase (431 aa).

Residues G13–K19 and G41–T43 contribute to the GTP site. Catalysis depends on D14, which acts as the Proton acceptor. The Mg(2+) site is built by D14 and G41. Residues D14–K17, N39–H42, T130, R144, Q225, T240, and R304 contribute to the IMP site. The active-site Proton donor is the H42. Substrate is bound at residue S300–R306. Residues R306, K332–D334, and S414–G416 contribute to the GTP site.

This sequence belongs to the adenylosuccinate synthetase family. Homodimer. Requires Mg(2+) as cofactor.

The protein localises to the cytoplasm. The enzyme catalyses IMP + L-aspartate + GTP = N(6)-(1,2-dicarboxyethyl)-AMP + GDP + phosphate + 2 H(+). Its pathway is purine metabolism; AMP biosynthesis via de novo pathway; AMP from IMP: step 1/2. Its function is as follows. Plays an important role in the de novo pathway of purine nucleotide biosynthesis. Catalyzes the first committed step in the biosynthesis of AMP from IMP. The protein is Adenylosuccinate synthetase of Bordetella petrii (strain ATCC BAA-461 / DSM 12804 / CCUG 43448).